Here is a 511-residue protein sequence, read N- to C-terminus: 2,3-bisphosphoglycerate-independent phosphoglycerate mutase (511 aa).

Mn(2+) is bound at residue aspartate 12. Residue tyrosine 36 is modified to Phosphotyrosine. Serine 62 is a binding site for Mn(2+). The active-site Phosphoserine intermediate is serine 62. Residues histidine 123, 153–154, arginine 185, arginine 191, 261–264, and lysine 336 each bind substrate; these read RD and RPDR. Aspartate 403, histidine 407, aspartate 444, histidine 445, and histidine 462 together coordinate Mn(2+).

The protein belongs to the BPG-independent phosphoglycerate mutase family. Monomer. Requires Mn(2+) as cofactor.

It carries out the reaction (2R)-2-phosphoglycerate = (2R)-3-phosphoglycerate. It participates in carbohydrate degradation; glycolysis; pyruvate from D-glyceraldehyde 3-phosphate: step 3/5. Essential for rapid growth and for sporulation. Catalyzes the interconversion of 2-phosphoglycerate and 3-phosphoglycerate. The sequence is that of 2,3-bisphosphoglycerate-independent phosphoglycerate mutase from Bacillus velezensis (strain DSM 23117 / BGSC 10A6 / LMG 26770 / FZB42) (Bacillus amyloliquefaciens subsp. plantarum).